A 1160-amino-acid chain; its full sequence is MNREDRNVLRMKERERRNQEIQQGEDAFPPSSPLFAEPYKVTSKEDKLSSRIQSMLGNYDEMKDYIGDRSIPKLVAIPKPAVPTTTDEKANPNFFEQRHGGSHQSSKWTPVGPAPSTSQSQKRSSALQSGHSSQRSGAGGSGASSSGQRHDRDSYSSSRKKGQHGSEHSKSRSSSPGKPQAVSSLSSSHSRSHGNDHHSKEHQRSKSPRDPDANWDSPSRGPFSSGQHSSQSFPPSLMSKSSSMLQKPTAYVRPMDGQESVEPKLSSEHYSSQSHGNSMTELKPSSKAHLTKLKIPSRPLDASVSGDVSCVDEILKEMTHSWPPPLTAIHTPCKTEPSKFPFPTKESQQSNFGPGEQKRYSTAKTSNGHQSKSMLKDDLKLSSSEDSDGEQDCDKTMPRSTPGSNSEPSHHNSEGADNSRDDSSSHSGSESSSGSDSESESSSSDSEANEPSQSASPEPEPPPTNKWQLDNWLNKVNPHKVSPASSVDSNIPSSQAYKKEGREQGTASNYTDPGGTKETSSATPGRDSKTIQKGSESGRGRQKSPAQSDSTTQRRTVGKKQPKKPEKSAAEEPRGGLKIESETPVDMAASMPSSRHKAATKGSRKPNIKKESKSSPRPTAEKKKYKSASKPSQKSREIIETDTSSSDSDGSESLPPSSQTPKYPESNRTPVKPSSVEEEDSFFRQRMFSPMEEKELLSPLSEPDDRYPLIVKIDLNLLTRIPGKPYKETEPPKGEKKNVPEKHSREVQKQASEKASNKGKRKHKNDDDTRASESKKPKTEDKNSSGHKPSSSRESSKQSSTKEKDLLPSPAGPILSKDSKTEHGSRKRTVSQSSSLKSSGTSSKENSGSSSKSSSSSTAKQKKTEGKGPSSSKEAKEKAPNSSSNCPPSTPTSESSKPRRTKLAFDDRNYSADHYLQEAKKLKHNADALSDRFEKAVYYLDAVVSFIECGNALEKNAQESKSPFPMYSDTVELIKYTMKLKNYLAPDATAADKRLTVLCLRCQSLLYLRLFKLKKENALKYSKTLTEHLKNSYSNSQAPSPGLGSKAVGMPSPVSPKLSPGNSGSYSSGGSSASASGSSVTIPQKIHQMAASYVQVTSNFLYATEIWDQAEQLSKEQKEFFAELDKVMGPLIFNASIMTDLARYTRQGLHWLRQDAKLIS.

Residues 1-19 (MNREDRNVLRMKERERRNQ) show a composition bias toward basic and acidic residues. Disordered stretches follow at residues 1 to 42 (MNRE…YKVT), 78 to 289 (PKPA…SKAH), 322 to 908 (WPPP…FDDR), and 1031 to 1070 (NSYS…SSGG). Residues 115–128 (PSTSQSQKRSSALQ) show a composition bias toward polar residues. At serine 120 the chain carries Phosphoserine. Positions 172–189 (RSSSPGKPQAVSSLSSSH) are enriched in low complexity. Positions 193–212 (HGNDHHSKEHQRSKSPRDPD) are enriched in basic and acidic residues. Phosphoserine is present on serine 207. Low complexity predominate over residues 229-247 (SSQSFPPSLMSKSSSMLQK). 2 stretches are compositionally biased toward polar residues: residues 268-280 (EHYS…NSMT) and 360-370 (YSTAKTSNGHQ). Serine 382, serine 383, serine 384, and serine 387 each carry phosphoserine. Polar residues predominate over residues 398–407 (PRSTPGSNSE). Residues 408–424 (PSHHNSEGADNSRDDSS) are compositionally biased toward basic and acidic residues. The span at 425–457 (SHSGSESSSGSDSESESSSSDSEANEPSQSASP) shows a compositional bias: low complexity. Phosphoserine is present on residues serine 482, serine 485, and serine 486. Composition is skewed to polar residues over residues 483–496 (PASS…SSQA), 505–523 (GTAS…SSAT), and 544–555 (SPAQSDSTTQRR). Serine 544 is modified (phosphoserine). Residues 563–581 (KKPEKSAAEEPRGGLKIES) are compositionally biased toward basic and acidic residues. Lysine 578 participates in a covalent cross-link: Glycyl lysine isopeptide (Lys-Gly) (interchain with G-Cter in SUMO2). Basic residues predominate over residues 594–607 (SRHKAATKGSRKPN). The segment covering 608–622 (IKKESKSSPRPTAEK) has biased composition (basic and acidic residues). The span at 641-657 (TDTSSSDSDGSESLPPS) shows a compositional bias: low complexity. Residue serine 666 is modified to Phosphoserine. Threonine 669 is subject to Phosphothreonine. Serine 675, serine 689, serine 698, and serine 701 each carry phosphoserine. Tyrosine 707 carries the post-translational modification Phosphotyrosine. Composition is skewed to basic and acidic residues over residues 725 to 756 (PYKE…EKAS), 764 to 784 (KNDD…DKNS), and 794 to 806 (ESSK…EKDL). Serine 809 carries the phosphoserine modification. Lysine 817 is subject to N6-acetyllysine. At serine 831 the chain carries Phosphoserine. 2 stretches are compositionally biased toward low complexity: residues 831 to 859 (SQSS…SSTA) and 880 to 895 (PNSS…TSES). Residues serine 1040, serine 1052, serine 1055, and serine 1059 each carry the phosphoserine modification. The span at 1059-1070 (SPGNSGSYSSGG) shows a compositional bias: low complexity.

This sequence belongs to the AF4 family. Component of the super elongation complex (SEC), at least composed of EAF1, EAF2, CDK9, MLLT3/AF9, AFF (AFF1 or AFF4), the P-TEFb complex and ELL (ELL, ELL2 or ELL3). Interacts with ELL2; the interaction is direct and leads to stabilize ELL2 and prevent ELL2 ubiquitination and degradation. Interacts with ELL3; the interaction is direct. In terms of processing, dephosphorylated at Ser-544 by the PNUTS-PP1 complex, promoting RNA polymerase II transcription pause-release. As to expression, highly expressed in testis by Sertoli cells, and at low levels in other tissues.

Its subcellular location is the nucleus. It localises to the chromosome. Its function is as follows. Key component of the super elongation complex (SEC), a complex required to increase the catalytic rate of RNA polymerase II transcription by suppressing transient pausing by the polymerase at multiple sites along the DNA. In the SEC complex, AFF4 acts as a central scaffold that recruits other factors through direct interactions with ELL proteins (ELL, ELL2 or ELL3) and the P-TEFb complex. In Mus musculus (Mouse), this protein is AF4/FMR2 family member 4 (Aff4).